A 387-amino-acid chain; its full sequence is 3-ketoacyl-CoA thiolase (387 aa).

Cys-91 functions as the Acyl-thioester intermediate in the catalytic mechanism. Residues His-343 and Cys-373 each act as proton acceptor in the active site.

It belongs to the thiolase-like superfamily. Thiolase family. In terms of assembly, heterotetramer of two alpha chains (FadB) and two beta chains (FadA).

It localises to the cytoplasm. The enzyme catalyses an acyl-CoA + acetyl-CoA = a 3-oxoacyl-CoA + CoA. It participates in lipid metabolism; fatty acid beta-oxidation. Catalyzes the final step of fatty acid oxidation in which acetyl-CoA is released and the CoA ester of a fatty acid two carbons shorter is formed. The chain is 3-ketoacyl-CoA thiolase from Shewanella denitrificans (strain OS217 / ATCC BAA-1090 / DSM 15013).